A 224-amino-acid chain; its full sequence is ATP synthase subunit a (224 aa).

A run of 6 helical transmembrane segments spans residues 17–37 (FIYM…VKMA), 78–98 (LVAT…VPGF), 104–124 (FLEF…YEGI), 136–156 (FLGP…VSHF), 176–196 (FLMV…YALL), and 201–221 (FLQA…AIAV).

Belongs to the ATPase A chain family. F-type ATPases have 2 components, CF(1) - the catalytic core - and CF(0) - the membrane proton channel. CF(1) has five subunits: alpha(3), beta(3), gamma(1), delta(1), epsilon(1). CF(0) has three main subunits: a(1), b(2) and c(9-12). The alpha and beta chains form an alternating ring which encloses part of the gamma chain. CF(1) is attached to CF(0) by a central stalk formed by the gamma and epsilon chains, while a peripheral stalk is formed by the delta and b chains.

It is found in the cell inner membrane. Functionally, key component of the proton channel; it plays a direct role in the translocation of protons across the membrane. This Sulfurimonas denitrificans (strain ATCC 33889 / DSM 1251) (Thiomicrospira denitrificans (strain ATCC 33889 / DSM 1251)) protein is ATP synthase subunit a.